Reading from the N-terminus, the 557-residue chain is MYDHFNSPSIDILYDYGPFLKKCEMTGGIGSYSAGTPTPRVAIVGAGISGLVAATELLRAGVKDVVLYESRDRIGGRVWSQVFDQTRPRYIAEMGAMRFPPSATGLFHYLKKFGISTSTTFPDPGVVDTELHYRGKRYHWPAGKKPPELFRRVYEGWQSLLSEGYLLEGGSLVAPLDITAMLKSGRLEEAAIAWQGWLNVFRDCSFYNAIVCIFTGRHPPGGDRWARPEDFELFGSLGIGSGGFLPVFQAGFTEILRMVINGYQSDQRLIPDGISSLAARLADQSFDGKALRDRVCFSRVGRISREAEKIIIQTEAGEQRVFDRVIVTSSNRAMQMIHCLTDSESFLSRDVARAVRETHLTGSSKLFILTRTKFWIKNKLPTTIQSDGLVRGVYCLDYQPDEPEGHGVVLLSYTWEDDAQKMLAMPDKKTRCQVLVDDLAAIHPTFASYLLPVDGDYERYVLHHDWLTDPHSAGAFKLNYPGEDVYSQRLFFQPMTANSPNKDTGLYLAGCSCSFAGGWIEGAVQTALNSACAVLRSTGGQLSKGNPLDCINASYRY.

FMN is bound by residues Ser-49, Glu-69, Arg-71, Arg-77, and Arg-98. Arg-98 contacts substrate.

The protein belongs to the tryptophan 2-monooxygenase family. Monomer. The cofactor is FMN.

It carries out the reaction L-tryptophan + O2 = indole-3-acetamide + CO2 + H2O. It participates in plant hormone metabolism; auxin biosynthesis. This chain is Tryptophan 2-monooxygenase (iaaM), found in Pseudomonas savastanoi (Pseudomonas syringae pv. savastanoi).